A 262-amino-acid polypeptide reads, in one-letter code: Hydroxyethylthiazole kinase (262 aa).

Met43 serves as a coordination point for substrate. Residues Arg118 and Thr164 each contribute to the ATP site. Ala191 lines the substrate pocket.

The protein belongs to the Thz kinase family. Mg(2+) serves as cofactor.

The enzyme catalyses 5-(2-hydroxyethyl)-4-methylthiazole + ATP = 4-methyl-5-(2-phosphooxyethyl)-thiazole + ADP + H(+). The protein operates within cofactor biosynthesis; thiamine diphosphate biosynthesis; 4-methyl-5-(2-phosphoethyl)-thiazole from 5-(2-hydroxyethyl)-4-methylthiazole: step 1/1. Functionally, catalyzes the phosphorylation of the hydroxyl group of 4-methyl-5-beta-hydroxyethylthiazole (THZ). This chain is Hydroxyethylthiazole kinase, found in Cereibacter sphaeroides (strain ATCC 17025 / ATH 2.4.3) (Rhodobacter sphaeroides).